A 290-amino-acid chain; its full sequence is uncharacterized protein (290 aa).

The interval glutamate 153–proline 178 is disordered. Residues isoleucine 157–proline 178 show a composition bias toward polar residues. Residues leucine 202–valine 222 traverse the membrane as a helical segment. The interval lysine 246–serine 276 is disordered. Positions proline 252–serine 261 are enriched in polar residues.

It is found in the membrane. This is an uncharacterized protein from Mus musculus (Mouse).